A 666-amino-acid polypeptide reads, in one-letter code: Threonine--tRNA ligase (666 aa).

Residues 1–64 (MSDTVSLTFP…VDGKIEIVTR (64 aa)) enclose the TGS domain. The segment at 245-553 (DHRKLGREMD…LIENFAGHMP (309 aa)) is catalytic. Zn(2+)-binding residues include C347, H398, and H530.

Belongs to the class-II aminoacyl-tRNA synthetase family. In terms of assembly, homodimer. The cofactor is Zn(2+).

It localises to the cytoplasm. It carries out the reaction tRNA(Thr) + L-threonine + ATP = L-threonyl-tRNA(Thr) + AMP + diphosphate + H(+). Its function is as follows. Catalyzes the attachment of threonine to tRNA(Thr) in a two-step reaction: L-threonine is first activated by ATP to form Thr-AMP and then transferred to the acceptor end of tRNA(Thr). Also edits incorrectly charged L-seryl-tRNA(Thr). The chain is Threonine--tRNA ligase from Allorhizobium ampelinum (strain ATCC BAA-846 / DSM 112012 / S4) (Agrobacterium vitis (strain S4)).